The sequence spans 407 residues: Phosphopentomutase (407 aa).

Residues Asp-10, Asp-306, His-311, Asp-347, His-348, and His-359 each coordinate Mn(2+).

The protein belongs to the phosphopentomutase family. The cofactor is Mn(2+).

The protein localises to the cytoplasm. The catalysed reaction is 2-deoxy-alpha-D-ribose 1-phosphate = 2-deoxy-D-ribose 5-phosphate. The enzyme catalyses alpha-D-ribose 1-phosphate = D-ribose 5-phosphate. It functions in the pathway carbohydrate degradation; 2-deoxy-D-ribose 1-phosphate degradation; D-glyceraldehyde 3-phosphate and acetaldehyde from 2-deoxy-alpha-D-ribose 1-phosphate: step 1/2. Functionally, isomerase that catalyzes the conversion of deoxy-ribose 1-phosphate (dRib-1-P) and ribose 1-phosphate (Rib-1-P) to deoxy-ribose 5-phosphate (dRib-5-P) and ribose 5-phosphate (Rib-5-P), respectively. This is Phosphopentomutase from Serratia proteamaculans (strain 568).